The sequence spans 226 residues: Small ribosomal subunit protein uS3 (226 aa).

In terms of domain architecture, KH type-2 spans 36–104 (IRKYLENRLS…KIQINIFEIK (69 aa)).

Belongs to the universal ribosomal protein uS3 family. As to quaternary structure, part of the 30S ribosomal subunit. Forms a tight complex with proteins S10 and S14.

Binds the lower part of the 30S subunit head. Binds mRNA in the 70S ribosome, positioning it for translation. The protein is Small ribosomal subunit protein uS3 of Karelsulcia muelleri (strain GWSS) (Sulcia muelleri).